Reading from the N-terminus, the 114-residue chain is Pro-FMRFamide-related neuropeptide FF (114 aa).

The N-terminal stretch at 1–21 (MDSKWAAVLLLLLLLRNWGHA) is a signal peptide. Residues 22–69 (EEAGSWGEDQVFAEEDKGPHPSQYAHTPDRIQTPGSLMRVLLQAMERP) constitute a propeptide that is removed on maturation. The tract at residues 29 to 51 (EDQVFAEEDKGPHPSQYAHTPDR) is disordered. A Phenylalanine amide modification is found at phenylalanine 82. Residues 85 to 100 (NAWGPWSKEQLSPQAR) constitute a propeptide that is removed on maturation. At phenylalanine 111 the chain carries Phenylalanine amide.

The protein belongs to the FARP (FMRFamide related peptide) family.

It localises to the secreted. In terms of biological role, morphine modulating peptides. Have wide-ranging physiologic effects, including the modulation of morphine-induced analgesia, elevation of arterial blood pressure, and increased somatostatin secretion from the pancreas. Neuropeptide FF and SF potentiate and sensitize ASIC2 and ASIC3 channels. The sequence is that of Pro-FMRFamide-related neuropeptide FF (Npff) from Rattus norvegicus (Rat).